Consider the following 173-residue polypeptide: Shikimate kinase (173 aa).

An ATP-binding site is contributed by 11 to 16 (GTGKTS). Threonine 15 serves as a coordination point for Mg(2+). The substrate site is built by aspartate 33, arginine 57, and glycine 79. Arginine 117 is an ATP binding site. Arginine 136 is a substrate binding site.

It belongs to the shikimate kinase family. As to quaternary structure, monomer. Mg(2+) serves as cofactor.

The protein localises to the cytoplasm. The enzyme catalyses shikimate + ATP = 3-phosphoshikimate + ADP + H(+). Its pathway is metabolic intermediate biosynthesis; chorismate biosynthesis; chorismate from D-erythrose 4-phosphate and phosphoenolpyruvate: step 5/7. Catalyzes the specific phosphorylation of the 3-hydroxyl group of shikimic acid using ATP as a cosubstrate. The protein is Shikimate kinase of Thermodesulfovibrio yellowstonii (strain ATCC 51303 / DSM 11347 / YP87).